Here is a 121-residue protein sequence, read N- to C-terminus: Small basic protein (121 aa).

The next 3 helical transmembrane spans lie at 2 to 22 (WLPV…NLTI), 29 to 49 (YLSL…RAHL), and 57 to 77 (VFVS…FLGV).

This sequence belongs to the sbp family.

The protein resides in the cell membrane. This chain is Small basic protein (sbp), found in Bacillus subtilis (strain 168).